We begin with the raw amino-acid sequence, 66 residues long: Small archaeal modifier protein 2 (66 aa).

A Glycyl lysine isopeptide (Lys-Gly) (interchain with G-Cter in SAMP2) cross-link involves residue K58. G66 carries the post-translational modification 1-thioglycine; alternate. The residue at position 66 (G66) is a Glycyl adenylate; alternate. G66 is covalently cross-linked (Glycyl lysine isopeptide (Gly-Lys) (interchain with K-? in acceptor proteins); alternate).

In terms of assembly, monomer. Monomeric and polymeric forms interact with NcsA. Post-translationally, the C-terminal glycine is likely acyl-adenylated (-COAMP) by UbaA, and also probably thiocarboxylated (-COSH) to function in sulfur transfer.

Functions as a protein modifier covalently attached to lysine residues of substrate proteins, as well as a sulfur carrier in tRNA thiolation. The protein modification process is termed sampylation and involves the formation of an isopeptide bond between the SAMP2 C-terminal glycine carboxylate and the epsilon-amino group of lysine residues on target proteins. Is able to form polymeric chains with itself at Lys-58, similar to ubiquitin and other ubiquitin-like proteins. May serve as a proteolytic signal in the cell to target proteins for degradation by proteasomes. The protein is Small archaeal modifier protein 2 (samp2) of Haloferax volcanii (strain ATCC 29605 / DSM 3757 / JCM 8879 / NBRC 14742 / NCIMB 2012 / VKM B-1768 / DS2) (Halobacterium volcanii).